The primary structure comprises 402 residues: Enoyl-[acyl-carrier-protein] reductase [NADH] (402 aa).

Residues G48 to F53, F75 to E76, D112 to V113, and I141 to A142 contribute to the NAD(+) site. Position 231 (Y231) interacts with substrate. Y241 acts as the Proton donor in catalysis. NAD(+)-binding positions include K250 and L279–T281.

This sequence belongs to the TER reductase family. Monomer.

The enzyme catalyses a 2,3-saturated acyl-[ACP] + NAD(+) = a (2E)-enoyl-[ACP] + NADH + H(+). It functions in the pathway lipid metabolism; fatty acid biosynthesis. Involved in the final reduction of the elongation cycle of fatty acid synthesis (FAS II). Catalyzes the reduction of a carbon-carbon double bond in an enoyl moiety that is covalently linked to an acyl carrier protein (ACP). This chain is Enoyl-[acyl-carrier-protein] reductase [NADH], found in Vibrio cholerae serotype O1 (strain ATCC 39541 / Classical Ogawa 395 / O395).